The sequence spans 494 residues: Sphingosine-1-phosphate transporter MFSD2B (494 aa).

Pro residues predominate over residues 1 to 12; the sequence is MSVPHGPTPAPV. The tract at residues 1 to 26 is disordered; it reads MSVPHGPTPAPVAEPHTQEPGSDKRD. The next 10 membrane-spanning stretches (helical) occupy residues 103–123, 140–160, 179–199, 223–243, 277–297, 310–330, 339–359, 360–380, 402–422, and 449–469; these read LMPWALGCMPLIALAYFFLWF, CLFQALATFFQVPYTALTMIL, MAGTLMGATVHGLIVSSAHGS, IAAAVVALTYPVCGSLLCLGV, VVSFLFISAAVQVEQSYLVLF, NLVLIILVSAVLSTPLWEWVL, AFGICVMVPFSILLAAVPSAP, VAYVVAFVSGVSIAVSLLLPW, TIFYSSYVFFTKLSGAGALGI, and VLIGAVPTCMILIGLCILLVG. A disordered region spans residues 473–494; it reads KMPRQDTSSQLSLRRRTSYSLA. Positions 485-494 are enriched in basic residues; sequence LRRRTSYSLA.

This sequence belongs to the major facilitator superfamily. Widely expressed with highest expression in spleen, lung and testis. Predominantly expressed in erythroid lineages giving rise to erythrocytes and platelets, but absent in lymphoid lineages.

The protein localises to the cell membrane. It carries out the reaction sphing-4-enine 1-phosphate(in) = sphing-4-enine 1-phosphate(out). The enzyme catalyses sphinganine 1-phosphate(in) = sphinganine 1-phosphate(out). The catalysed reaction is sphinga-4E,14Z-dienine-1-phosphate(in) = sphinga-4E,14Z-dienine-1-phosphate(out). In terms of biological role, lipid transporter that specifically mediates export of sphingosine-1-phosphate in red blood cells and platelets. Sphingosine-1-phosphate is a signaling sphingolipid and its export from red blood cells into in the plasma is required for red blood cell morphology. Sphingosine-1-phosphate export from platelets is required for platelet aggregation and thrombus formation. Mediates the export of different sphingosine-1-phosphate (S1P) species, including S1P(d18:0) (sphinganine 1-phosphate), S1P (d18:1) (sphing-4-enine 1-phosphate) and S1P (d18:2) (sphinga-4E,14Z-dienine-1-phosphate). Release of sphingosine-1-phosphate is facilitated by a proton gradient. In contrast, cations, such as sodium, are not required to drive sphingosine-1-phosphate transport. In addition to export, also able to mediate S1P import. Does not transport lysophosphatidylcholine (LPC). The chain is Sphingosine-1-phosphate transporter MFSD2B from Mus musculus (Mouse).